A 170-amino-acid polypeptide reads, in one-letter code: Adenine phosphoribosyltransferase (170 aa).

It belongs to the purine/pyrimidine phosphoribosyltransferase family. Homodimer.

It localises to the cytoplasm. The enzyme catalyses AMP + diphosphate = 5-phospho-alpha-D-ribose 1-diphosphate + adenine. It participates in purine metabolism; AMP biosynthesis via salvage pathway; AMP from adenine: step 1/1. In terms of biological role, catalyzes a salvage reaction resulting in the formation of AMP, that is energically less costly than de novo synthesis. The protein is Adenine phosphoribosyltransferase of Brachyspira hyodysenteriae (strain ATCC 49526 / WA1).